The primary structure comprises 737 residues: Polyribonucleotide nucleotidyltransferase (737 aa).

2 residues coordinate Mg(2+): Asp-514 and Asp-520. The KH domain occupies 580 to 639 (PRIITVKIPVDKIGEVIGPKGKMINQIQEDTGADITIEDDGTIYIGAQAGSQAEAARATI). One can recognise an S1 motif domain in the interval 651–723 (GERYLGTVVK…SRGKLSLIPV (73 aa)).

This sequence belongs to the polyribonucleotide nucleotidyltransferase family. Mg(2+) serves as cofactor.

The protein resides in the cytoplasm. The enzyme catalyses RNA(n+1) + phosphate = RNA(n) + a ribonucleoside 5'-diphosphate. Involved in mRNA degradation. Catalyzes the phosphorolysis of single-stranded polyribonucleotides processively in the 3'- to 5'-direction. The protein is Polyribonucleotide nucleotidyltransferase of Streptomyces griseus subsp. griseus (strain JCM 4626 / CBS 651.72 / NBRC 13350 / KCC S-0626 / ISP 5235).